A 193-amino-acid chain; its full sequence is Protein SINE3 (193 aa).

The segment at 15-35 (SELGAKRLKDPEMKNRKVTTE) is disordered. Basic and acidic residues predominate over residues 18 to 35 (GAKRLKDPEMKNRKVTTE). Positions 155-193 (VTVKFRIVLLSFILWAILAAIVVFFSSGEERAYRGPLPT) constitute a KASH domain. Residues 161-181 (IVLLSFILWAILAAIVVFFSS) form a helical membrane-spanning segment. The short motif at 190-193 (PLPT) is the Required for nuclear localization element.

Interacts with SUN1 and SUN2.

The protein resides in the nucleus membrane. The chain is Protein SINE3 from Arabidopsis thaliana (Mouse-ear cress).